A 148-amino-acid chain; its full sequence is FAD synthase (148 aa).

ATP contacts are provided by residues 14 to 15, 19 to 22, and Asp-100; these read VF and HVGH.

It belongs to the archaeal FAD synthase family. In terms of assembly, homodimer. Requires a divalent metal cation as cofactor.

The enzyme catalyses FMN + ATP + H(+) = FAD + diphosphate. It functions in the pathway cofactor biosynthesis; FAD biosynthesis; FAD from FMN: step 1/1. Its function is as follows. Catalyzes the transfer of the AMP portion of ATP to flavin mononucleotide (FMN) to produce flavin adenine dinucleotide (FAD) coenzyme. The chain is FAD synthase from Thermococcus sibiricus (strain DSM 12597 / MM 739).